We begin with the raw amino-acid sequence, 121 residues long: Small ribosomal subunit protein uS13 (121 aa).

Residues 92–121 (KRGLPVRGQRTRTNARTRKGPRRAAASLKK) are disordered.

This sequence belongs to the universal ribosomal protein uS13 family. In terms of assembly, part of the 30S ribosomal subunit. Forms a loose heterodimer with protein S19. Forms two bridges to the 50S subunit in the 70S ribosome.

Its function is as follows. Located at the top of the head of the 30S subunit, it contacts several helices of the 16S rRNA. In the 70S ribosome it contacts the 23S rRNA (bridge B1a) and protein L5 of the 50S subunit (bridge B1b), connecting the 2 subunits; these bridges are implicated in subunit movement. Contacts the tRNAs in the A and P-sites. In Bordetella bronchiseptica (strain ATCC BAA-588 / NCTC 13252 / RB50) (Alcaligenes bronchisepticus), this protein is Small ribosomal subunit protein uS13.